A 150-amino-acid chain; its full sequence is Transcriptional regulator MraZ (150 aa).

SpoVT-AbrB domains follow at residues 8–55 and 84–127; these read FINN…GISH and AVQL…QPQN.

It belongs to the MraZ family. Forms oligomers.

It is found in the cytoplasm. It localises to the nucleoid. This Rickettsia bellii (strain OSU 85-389) protein is Transcriptional regulator MraZ.